The primary structure comprises 260 residues: Acetylglutamate kinase (260 aa).

Residues 46–47, R68, and N160 contribute to the substrate site; that span reads GG.

Belongs to the acetylglutamate kinase family. ArgB subfamily.

It is found in the cytoplasm. The enzyme catalyses N-acetyl-L-glutamate + ATP = N-acetyl-L-glutamyl 5-phosphate + ADP. The protein operates within amino-acid biosynthesis; L-arginine biosynthesis; N(2)-acetyl-L-ornithine from L-glutamate: step 2/4. Catalyzes the ATP-dependent phosphorylation of N-acetyl-L-glutamate. In Shewanella sp. (strain ANA-3), this protein is Acetylglutamate kinase.